We begin with the raw amino-acid sequence, 666 residues long: Spartin (666 aa).

N-acetylmethionine is present on M1. Positions 16–94 (IREAYKKAFL…LQNVRTRLEI (79 aa)) constitute an MIT domain. A disordered region spans residues 124–156 (EKLPEPQSFSSAPQHAEVNGNTSTPSAGAVAAP). Residues 146–156 (STPSAGAVAAP) show a composition bias toward low complexity. Positions 190–380 (DSGEFSSVGE…QLDQGNKDVR (191 aa)) are ubiquitin-binding region (UBR) domain. The LC3-interacting region (LIR); mediates interaction with MAP1LC3A AND MAP1LC3C signature appears at 193–200 (EFSSVGEE). A disordered region spans residues 344–398 (EENEFQIPGRTRPSSDQLKEASGTDVKQLDQGNKDVRHKGKRGKRAKDTSSEEVN). K362 participates in a covalent cross-link: Glycyl lysine isopeptide (Lys-Gly) (interchain with G-Cter in ubiquitin). The segment covering 379-388 (VRHKGKRGKR) has biased composition (basic residues). The region spanning 427-611 (ILSGASWVSW…YNINNIGIKA (185 aa)) is the Senescence domain. The required for localization to lipid droplets stretch occupies residues 431-503 (ASWVSWGLVK…LVDGVCTVAN (73 aa)). S470 carries the post-translational modification Phosphoserine. The tract at residues 636-666 (RENQEGAANVNVRGEKDEQTKEVKEAKKKDK) is disordered. The span at 648–666 (RGEKDEQTKEVKEAKKKDK) shows a compositional bias: basic and acidic residues.

As to quaternary structure, interacts with ITCH and WWP1. Interacts (via MIT domain) with IST1; leading to the recruitment of SPART to midbodies. Interacts with MAP1LC3A and MAP1LC3C. Post-translationally, ubiquitinated; ubiquitination does not require ITCH and WWP1. Ubiquitously expressed, with highest levels of expression detected in adipose tissue.

The protein localises to the cytoplasm. It is found in the midbody. It localises to the lipid droplet. Its function is as follows. Lipophagy receptor that plays an important role in lipid droplet (LD) turnover in motor neurons. Localizes to LDs and interacts with components of the autophagy machinery, such as MAP1LC3A/C proteins to deliver LDs to autophagosomes for degradation via lipophagy. Lipid transfer protein required for lipid droplet degradation, including by lipophagy. Can bind and transfer all lipid species found in lipid droplets, from phospholipids to triglycerides and sterol esters but the direction of lipid transfer by spartin and its cargos are unknown. May be implicated in endosomal trafficking, or microtubule dynamics, or both. Participates in cytokinesis. The protein is Spartin of Homo sapiens (Human).